An 813-amino-acid chain; its full sequence is LPS-assembly protein LptD (813 aa).

The signal sequence occupies residues 1 to 22 (MRRALRLLPLPLSIAICLPAMA).

Belongs to the LptD family. As to quaternary structure, component of the lipopolysaccharide transport and assembly complex. Interacts with LptE and LptA.

The protein localises to the cell outer membrane. Together with LptE, is involved in the assembly of lipopolysaccharide (LPS) at the surface of the outer membrane. This is LPS-assembly protein LptD from Xanthomonas oryzae pv. oryzae (strain MAFF 311018).